Consider the following 540-residue polypeptide: Phosphoenolpyruvate carboxykinase (ATP) (540 aa).

Arg65 is a binding site for substrate. Residue Lys87 is modified to N6-acetyllysine. Tyr207 and Lys213 together coordinate substrate. Residues Lys213, His232, and 248–256 (GLSGTGKTT) each bind ATP. Mn(2+)-binding residues include Lys213 and His232. A Mn(2+)-binding site is contributed by Asp269. Residues Glu297, Arg333, 449-450 (RI), and Thr455 each bind ATP. Position 333 (Arg333) interacts with substrate. An N6-acetyllysine modification is found at Lys523.

Belongs to the phosphoenolpyruvate carboxykinase (ATP) family. In terms of assembly, monomer. Mn(2+) is required as a cofactor.

It localises to the cytoplasm. The enzyme catalyses oxaloacetate + ATP = phosphoenolpyruvate + ADP + CO2. It participates in carbohydrate biosynthesis; gluconeogenesis. Involved in the gluconeogenesis. Catalyzes the conversion of oxaloacetate (OAA) to phosphoenolpyruvate (PEP) through direct phosphoryl transfer between the nucleoside triphosphate and OAA. The polypeptide is Phosphoenolpyruvate carboxykinase (ATP) (Shigella dysenteriae serotype 1 (strain Sd197)).